The following is a 402-amino-acid chain: Dihydrolipoyllysine-residue acetyltransferase component of pyruvate dehydrogenase complex (402 aa).

One can recognise a Lipoyl-binding domain in the interval 1-69; sequence MPDIGLEEVE…KTSSIIMIFK (69 aa). K35 is modified (N6-lipoyllysine). The 38-residue stretch at 109 to 146 folds into the Peripheral subunit-binding (PSBD) domain; it reads HATPVVRRLARHLNVDLKNITPSGPKNRILKEDIELYI. Residue H375 is part of the active site.

The protein belongs to the 2-oxoacid dehydrogenase family. As to quaternary structure, forms a 24-polypeptide structural core with octahedral symmetry. It depends on (R)-lipoate as a cofactor.

The enzyme catalyses N(6)-[(R)-dihydrolipoyl]-L-lysyl-[protein] + acetyl-CoA = N(6)-[(R)-S(8)-acetyldihydrolipoyl]-L-lysyl-[protein] + CoA. Functionally, the pyruvate dehydrogenase complex catalyzes the overall conversion of pyruvate to acetyl-CoA and CO(2). It contains multiple copies of three enzymatic components: pyruvate dehydrogenase (E1), dihydrolipoamide acetyltransferase (E2) and lipoamide dehydrogenase (E3). This is Dihydrolipoyllysine-residue acetyltransferase component of pyruvate dehydrogenase complex (aceF) from Buchnera aphidicola subsp. Schizaphis graminum (strain Sg).